Here is a 72-residue protein sequence, read N- to C-terminus: Guanine nucleotide-binding protein subunit gamma (72 aa).

The disordered stretch occupies residues 32–72 (MVSVAPPKANPSVSSKTKQQQHFKPGKATKDKATTKCCTIS). A lipid anchor (S-palmitoyl cysteine) is attached at Cys-68. Cys-69 carries the cysteine methyl ester modification. Cys-69 is lipidated: S-farnesyl cysteine. A propeptide spans 70–72 (TIS) (removed in mature form).

This sequence belongs to the G protein gamma family. In terms of assembly, g proteins are composed of 3 units, alpha, beta and gamma. Binding of the beta-gamma subunit complex (git5-git11) to the alpha subunit (gpa2) facilitates interaction with GPCR git3.

It localises to the cell membrane. Functionally, gamma subunit of the heterotrimeric guanine nucleotide-binding protein (G protein) involved in glucose-induced cAMP signaling. The beta-gamma subunits (git5-git11) promote binding of the alpha subunit gpa2 to GPCR git3, which senses extracellular glucose, to activate cAMP-PKA signaling and repress sexual development and gluconeogenesis. This chain is Guanine nucleotide-binding protein subunit gamma (git11), found in Schizosaccharomyces pombe (strain 972 / ATCC 24843) (Fission yeast).